Reading from the N-terminus, the 413-residue chain is BSD domain-containing protein 1-A (413 aa).

Positions 146–198 (WLAYWDPEQRKAEISELLVTSPSIRALFTKMVPAAVSHSEFWQRYFYKVHQLE) constitute a BSD domain. Basic and acidic residues-rich tracts occupy residues 208–219 (KQRADQSVHSEE) and 255–271 (HVED…RDHT). 2 disordered regions span residues 208 to 228 (KQRA…EEED) and 255 to 386 (HVED…EFDM). Over residues 274-287 (TSPSESSESISPIT) the composition is skewed to low complexity. Polar residues predominate over residues 297 to 322 (QTPSKEPSPGTLTVTKENTGAGTDET). Residues 342-352 (QREDPPSDLRV) are compositionally biased toward basic and acidic residues. Residues 356–375 (NSDSGKSTPSNNGQKGSSTD) are compositionally biased toward polar residues. The segment covering 376-386 (ISEDWEKEFDM) has biased composition (acidic residues).

In Xenopus laevis (African clawed frog), this protein is BSD domain-containing protein 1-A (bsdc1-a).